Consider the following 87-residue polypeptide: UPF0386 protein RSKD131_0371 (87 aa).

The protein belongs to the UPF0386 family.

This is UPF0386 protein RSKD131_0371 from Cereibacter sphaeroides (strain KD131 / KCTC 12085) (Rhodobacter sphaeroides).